The sequence spans 424 residues: Putative chloroquine resistance transporter (424 aa).

At 1-56 (MTVIKKGKNKKKNLKNDDRYKELDSLITNGSEIGDNSGRSCIKRFFKIIGNEMKNN) the chain is on the cytoplasmic side. A helical transmembrane segment spans residues 57 to 77 (VYVYFLSILYLCVCVMNKVFA). Topologically, residues 78 to 88 (KRTLNKMGNYS) are vacuolar. N-linked (GlcNAc...) asparagine glycosylation occurs at N86. A helical transmembrane segment spans residues 89 to 109 (FVTSETHNIICIVVFQLLYFI). Residues 110–125 (YRKTSTSGYKNESQKN) lie on the Cytoplasmic side of the membrane. The chain crosses the membrane as a helical span at residues 126 to 146 (FGWQFFLISLLDASTVIISMI). Residues 147 to 156 (GLTRTTGNIQ) are Vacuolar-facing. Residues 157-177 (SFIMQLIIPVNMYFCFMFLGY) traverse the membrane as a helical segment. The Cytoplasmic segment spans residues 178–180 (RYH). Residues 181-201 (LFNYLGAFIILITIAVVETFL) form a helical membrane-spanning segment. Over 202 to 209 (SFETQSEN) the chain is Vacuolar. Residues 210–230 (SIIFNLIMISALIPLSFSNMT) traverse the membrane as a helical segment. Residues 231–248 (REVVFKKHKINILRLNAM) lie on the Cytoplasmic side of the membrane. Residues 249-269 (VVLFQFFTSLLVLPVYNIPFL) form a helical membrane-spanning segment. At 270-317 (KEIYMPFSEMSTNINNGLRCLFYGQNTVVENCGVGMVKMCDNCEGAWK) the chain is on the vacuolar side. 2 disulfide bridges follow: C289-C312 and C301-C309. Residues 318 to 338 (TFITFSFFNICDNLLACYIID) form a helical membrane-spanning segment. At 339–346 (KFSTMTYT) the chain is on the cytoplasmic side. The helical transmembrane segment at 347–367 (IVSCIQGPAITIAYYFKFLAG) threads the bilayer. Over 368–377 (DAVRKPRILD) the chain is Vacuolar. Residues 378–398 (FLTLFGYLFGTIIYRIGNIIL) form a helical membrane-spanning segment. Residues 399 to 424 (EKKKMVKSQNSNDSEAELTCIETSTA) are Cytoplasmic-facing.

It belongs to the CRT-like transporter family.

It is found in the vacuole membrane. In terms of biological role, nutrient transporter. Involved in maintaining the osmotic homeostasis of the digestive vacuole. This is Putative chloroquine resistance transporter from Plasmodium yoelii yoelii.